The chain runs to 461 residues: Photosystem II CP43 reaction center protein (461 aa).

The propeptide occupies 1 to 2 (ME). Residue Thr3 is modified to N-acetylthreonine. Thr3 is modified (phosphothreonine). The next 5 helical transmembrane spans lie at 57 to 81 (LFEV…PHLA), 122 to 143 (LLGP…KDRN), 166 to 188 (KALY…RKIS), 243 to 263 (KPFA…LSYS), and 279 to 300 (WFNN…ASQA). A [CaMn4O5] cluster-binding site is contributed by Glu355. The helical transmembrane segment at 435–459 (RARAAAAGFEKGIDRDFEPVLSMTP) threads the bilayer.

Belongs to the PsbB/PsbC family. PsbC subfamily. As to quaternary structure, PSII is composed of 1 copy each of membrane proteins PsbA, PsbB, PsbC, PsbD, PsbE, PsbF, PsbH, PsbI, PsbJ, PsbK, PsbL, PsbM, PsbT, PsbX, PsbY, PsbZ, Psb30/Ycf12, at least 3 peripheral proteins of the oxygen-evolving complex and a large number of cofactors. It forms dimeric complexes. The cofactor is Binds multiple chlorophylls and provides some of the ligands for the Ca-4Mn-5O cluster of the oxygen-evolving complex. It may also provide a ligand for a Cl- that is required for oxygen evolution. PSII binds additional chlorophylls, carotenoids and specific lipids..

It localises to the plastid. It is found in the chloroplast thylakoid membrane. Functionally, one of the components of the core complex of photosystem II (PSII). It binds chlorophyll and helps catalyze the primary light-induced photochemical processes of PSII. PSII is a light-driven water:plastoquinone oxidoreductase, using light energy to abstract electrons from H(2)O, generating O(2) and a proton gradient subsequently used for ATP formation. In Trachelium caeruleum (Blue throatwort), this protein is Photosystem II CP43 reaction center protein.